The sequence spans 141 residues: Large ribosomal subunit protein uL16 (141 aa).

Belongs to the universal ribosomal protein uL16 family. Part of the 50S ribosomal subunit.

In terms of biological role, binds 23S rRNA and is also seen to make contacts with the A and possibly P site tRNAs. This chain is Large ribosomal subunit protein uL16, found in Thermus thermophilus (strain ATCC BAA-163 / DSM 7039 / HB27).